The sequence spans 426 residues: MNPSTITNDLTVEILSRLPAKSVARFHCVSKQWGSIFGSPYFKELFLTRSSTKPRLLFAMAEKVNEEKNCVWRFFSTPQLENPYEKSSSTLVAAAEFHVKFSPDKLYICHCYDLKYFSIGYASGLIYLYGDRGEATPLICNPTTGRYAILPNRYTYRKAYSFFGFDPIDKQYKALSIFYPSGPGHSKILTFGAGHMKWRKINCPLRYDRHDIKSEGICINGVLYYLGSTSDCVKDGHGIVSDYVIVCFDIRSEKFTFIDVERFCRLINYKGKLAVIYWEDDVDIYKLYYSDVDEYVEYNINDDDINELRVWVLEDVKKQQWSKYAYTWTDDRFFRRRVSIAGGTASGEIVFSMLKYTPKQPFYVFYFNPERNTLQRVEIQGFGEVLKKTCRVCTFVNHVEDLNVHDFKQLKSVHPPLVDEPDSESD.

The 48-residue stretch at Met1–Thr48 folds into the F-box domain.

The sequence is that of F-box protein At2g15640 from Arabidopsis thaliana (Mouse-ear cress).